The chain runs to 531 residues: MAAIKAINSKAEVARAQAALAVNICAARGLQDVLRTNLGPKGTMKMLVSGAGDVKLTKDGNVLLHEMQIQHPTASLIAKVATAQDDITGDGTTSNVLIIGELLKQADLYISEGLHPRIIAEGFEIAKIKALEVLEQVKIKKEMKREIHLDVARTSLQTKVHPQLADVLTEAVVDSVLAIRRPNYPIDLFMVEIMEMKHKSETDTKLIKGLVLDHGARHPDMKKRVDDAFILTCNVSLEYEKTEVSSGFFYKTAEEKEKLVKAERKFIEDRVQKIIDLKDKVCAQSNKGFVVINQKGIDPFSLDALAKHGILALRRAKRRNMERLSLACGGVAVNSVEDLSVDCLGHAGLVYEYTLGEEKYTFIEDCINPRSVTLLVKGPNKHTLTQIKDAVRDGLRAIKNAIEDGCVVPGAGAVEVVIAEALVTYKHTIQGRARLGVQAFADALLIIPKVLAQNSGYDLQETLVKVQAEHSNSKQPVGIDLNTGEPMVAADAGVWDNYCVKKQLLHSCTVIATNILLVDEIMRAGMSSLKG.

It belongs to the TCP-1 chaperonin family. In terms of assembly, component of the chaperonin-containing T-complex (TRiC), a heterooligomeric complex of about 850 to 900 kDa that forms two stacked rings, 12 to 16 nm in diameter.

It localises to the cytoplasm. Functionally, component of the chaperonin-containing T-complex (TRiC), a molecular chaperone complex that assists the folding of proteins upon ATP hydrolysis. In Bos taurus (Bovine), this protein is T-complex protein 1 subunit zeta-2 (CCT6B).